Here is a 322-residue protein sequence, read N- to C-terminus: Cytochrome f (322 aa).

The first 35 residues, 1-35 (MQNRNIFSWVKEQTTRSISVSIMILIYVITWTSIS), serve as a signal peptide directing secretion. Tyr38, Cys58, Cys61, and His62 together coordinate heme. The chain crosses the membrane as a helical span at residues 288–308 (VQGLFFFFASVILAQIFLVLK).

Belongs to the cytochrome f family. In terms of assembly, the 4 large subunits of the cytochrome b6-f complex are cytochrome b6, subunit IV (17 kDa polypeptide, petD), cytochrome f and the Rieske protein, while the 4 small subunits are PetG, PetL, PetM and PetN. The complex functions as a dimer. Requires heme as cofactor.

Its subcellular location is the plastid. The protein localises to the chloroplast thylakoid membrane. Component of the cytochrome b6-f complex, which mediates electron transfer between photosystem II (PSII) and photosystem I (PSI), cyclic electron flow around PSI, and state transitions. The sequence is that of Cytochrome f from Nandina domestica (Heavenly bamboo).